A 289-amino-acid polypeptide reads, in one-letter code: ATP synthase gamma chain (289 aa).

Belongs to the ATPase gamma chain family. In terms of assembly, F-type ATPases have 2 components, CF(1) - the catalytic core - and CF(0) - the membrane proton channel. CF(1) has five subunits: alpha(3), beta(3), gamma(1), delta(1), epsilon(1). CF(0) has three main subunits: a, b and c.

It localises to the cell inner membrane. In terms of biological role, produces ATP from ADP in the presence of a proton gradient across the membrane. The gamma chain is believed to be important in regulating ATPase activity and the flow of protons through the CF(0) complex. This is ATP synthase gamma chain from Janthinobacterium sp. (strain Marseille) (Minibacterium massiliensis).